Here is a 421-residue protein sequence, read N- to C-terminus: L-evernosamine nitrososynthase (421 aa).

The protein belongs to the acyl-CoA dehydrogenase family. Homotetramer. Requires FAD as cofactor.

The catalysed reaction is dTDP-beta-L-evernosamine + 2 NADPH + 2 O2 + H(+) = dTDP-2,3,6-trideoxy-3-C-methyl-4-O-methyl-3-nitroso-beta-L-arabino-hexopyranose + 2 NADP(+) + 3 H2O. The enzyme catalyses dTDP-beta-L-evernosamine + NADPH + O2 = dTDP-N-hydroxy-beta-L-evernosamine + NADP(+) + H2O. It carries out the reaction dTDP-N-hydroxy-beta-L-evernosamine + NADPH + O2 + H(+) = dTDP-2,3,6-trideoxy-3-C-methyl-4-O-methyl-3-nitroso-beta-L-arabino-hexopyranose + NADP(+) + 2 H2O. It participates in antibiotic biosynthesis. Functionally, nitrososynthase involved in the biosynthesis of everninomicin, a broad spectrum orthosomycin antibiotic. Catalyzes the double-oxidation of TDP-L-evernosamine to TDP-L-evernitrosose. The enzyme first oxidizes the substrate to a transient hydroxylamino intermediate, which is then further oxidized to nitroso sugar. The nitroso group is probably spontaneously oxidized giving TDP-L-evernitrose. In vitro, catalyzes the double-oxidation of TDP-L-epi-vancosamine to TDP-L-epi-vancosonitrose. Can also use biosynthetic progenitors of TDP-L-epi-vancosamine, but progenitors solely undergo single-oxidation reactions and terminate in the hydroxylamine oxidation state. This is L-evernosamine nitrososynthase from Micromonospora sp. (strain ATCC 39149 / NRRL 15099 / SCC 1413).